The primary structure comprises 228 residues: UPF0502 protein Rfer_1648 (228 aa).

This sequence belongs to the UPF0502 family.

The chain is UPF0502 protein Rfer_1648 from Albidiferax ferrireducens (strain ATCC BAA-621 / DSM 15236 / T118) (Rhodoferax ferrireducens).